The sequence spans 76 residues: UPF0235 protein MRA_1997 (76 aa).

This sequence belongs to the UPF0235 family.

The protein is UPF0235 protein MRA_1997 of Mycobacterium tuberculosis (strain ATCC 25177 / H37Ra).